A 238-amino-acid polypeptide reads, in one-letter code: MAEVNGDFPVPSFADGTGSVSAGLDLLVERSIHEARSTEPDASTQLTIIFGGSCRVFNGVPAQKVQEIIRIAFAGKQTKNVTGINPALNRALSFSTVADLPIARRRSLQRFLEKRRDRSTKPDGSMILPSQLTIIFGGSFSVFDGIPAEKVQEILHIAAAAKATETINLTSINPALKRAISFSNASTVACVSTADVPIARRRSLQRFFEKRRHRFVHTKPYSATTSEADKNETSPIVT.

The region spanning 39–74 is the Tify 1 domain; that stretch reads EPDASTQLTIIFGGSCRVFNGVPAQKVQEIIRIAFA. Residues 101-120 carry the Jas 1 motif; the sequence is PIARRRSLQRFLEKRRDRST. The short motif at 103 to 110 is the Nuclear localization signal 1 element; it reads ARRRSLQR. The region spanning 125-160 is the Tify 2 domain; that stretch reads SMILPSQLTIIFGGSFSVFDGIPAEKVQEILHIAAA. Positions 197–222 match the Jas 2 motif; that stretch reads PIARRRSLQRFFEKRRHRFVHTKPYS. Residues 199–206 carry the Nuclear localization signal 2 motif; it reads ARRRSLQR. The segment at 219–238 is disordered; sequence KPYSATTSEADKNETSPIVT.

This sequence belongs to the TIFY/JAZ family. In terms of assembly, interacts with MYC2, MYB21, MYB24, AFPH2/NINJA, TIFY10A/JAZ1, TIFY10B/JAZ2, TIFY6B/JAZ3, TIFY6A/JAZ4, TIFY7/JAZ9 and TIFY9/JAZ10. Ubiquitinated. Targeted for degradation by the SCF(COI1) E3 ubiquitin ligase-proteasome pathway during jasmonate signaling.

The protein resides in the nucleus. Repressor of jasmonate (JA) responses. Targets MYC2, MYC3 and MYC4 that are JA-dependent transcription activators. This Arabidopsis thaliana (Mouse-ear cress) protein is Protein TIFY 3A (TIFY3A).